The chain runs to 2444 residues: Protein SON (2444 aa).

Position 2 is an N-acetylalanine (A2). K16 bears the N6-acetyllysine mark. Polar residues predominate over residues 23-37 (ELSSGRSEGQLNGET). A disordered region spans residues 23 to 58 (ELSSGRSEGQLNGETNPPIEGNQAGDTAASARSLPN). K64 is covalently cross-linked (Glycyl lysine isopeptide (Lys-Gly) (interchain with G-Cter in SUMO2)). Basic and acidic residues predominate over residues 79 to 88 (YKPDLKEASR). The interval 79–155 (YKPDLKEASR…GNLESDSFLK (77 aa)) is disordered. S94 is subject to Phosphoserine. The segment covering 106–130 (KKSKKHKKHKNKKKKKKKEKEKKYK) has biased composition (basic residues). Residues 131–155 (RQPEESESKLKSHHDGNLESDSFLK) are compositionally biased toward basic and acidic residues. Phosphoserine occurs at positions 142, 150, 152, and 158. The residue at position 284 (K284) is an N6-acetyllysine. Disordered regions lie at residues 301–358 (TLTI…ESLE) and 391–468 (GPPV…PEPP). Pro residues-rich tracts occupy residues 393–406 (PVTP…PSAT) and 420–439 (PELP…PSVT). T395 is modified (phosphothreonine). Residues 721–850 (LASNTMDSQM…LATSSMDSQM (130 aa)) are 13 X 10 AA tandem repeats of L-A-[ST]-[NSG]-[TS]-MDSQM. Residues 907–983 (DPYRLAQDPY…IAPRPYRLAP (77 aa)) are 11 X 7 AA tandem repeats of [DR]-P-Y-R-[LI][AG][QHP]. The residue at position 945 (R945) is an Omega-N-methylarginine. Phosphothreonine is present on T954. Phosphoserine is present on S993. A run of 14 repeats spans residues 1001–1006 (ERSMMS), 1009–1014 (ERSMMS), 1016–1021 (ERSMMS), 1025–1030 (ERSMMS), 1033–1038 (ERSMMS), 1041–1046 (ERSMMS), 1050–1055 (ERSMMS), 1058–1063 (ERSMMS), 1066–1071 (ERSMMS), 1075–1080 (DRSMMS), 1084–1089 (DRSMMS), 1095–1100 (DRSMMS), 1106–1111 (DRSMMS), and 1115–1120 (DRSMMS). Residues 1001 to 1120 (ERSMMSSYER…SSYTDRSMMS (120 aa)) are 14 X 6 AA repeats of [ED]-R-S-M-M-S. R1002 carries the asymmetric dimethylarginine modification. The residue at position 1017 (R1017) is an Asymmetric dimethylarginine. Residues S1030 and S1038 each carry the phosphoserine modification. 2 positions are modified to phosphoserine: S1055 and S1063. Phosphoserine is present on S1077. A compositionally biased stretch (pro residues) spans 1141-1168 (PPLPPEEPPTMPPLPPEEPPMTPPLPPE). Residues 1141–1173 (PPLPPEEPPTMPPLPPEEPPMTPPLPPEEPPEG) are 3 X 11 AA tandem repats of P-P-L-P-P-E-E-P-P-[TME]-[MTG]. The tract at residues 1141-1213 (PPLPPEEPPT…PEPPVSQSEI (73 aa)) is disordered. Positions 1177-1213 (STEQSALTADNTWSTEVTLSTGESLSQPEPPVSQSEI) are enriched in polar residues. S1678, S1723, S1727, S1772, S1784, S1791, S1794, S1807, and S1808 each carry phosphoserine. The tract at residues 1802–2072 (ERASESSSEE…RSPKRLTDLD (271 aa)) is disordered. 3 stretches are compositionally biased toward basic and acidic residues: residues 1815–1826 (YEIFVKVKDTHE), 1834–1847 (RDKG…DSSL), and 1855–1870 (KSSE…ESRS). 2 stretches are compositionally biased toward basic residues: residues 1871–1934 (RARK…RKRS) and 1942–1973 (AARA…RRRS). 7 consecutive repeat copies span residues 1950–1956 (PSRRSRS), 1959–1977 (PSRR…FSIS), 1978–1984 (PSRRSRT), 1985–1991 (PSRRSRT), 1992–1998 (PSRRSRT), 1999–2005 (PSRRSRT), and 2006–2012 (PSRRSRT). Residues 1950–2019 (PSRRSRSHTP…SRTPSRRRRS (70 aa)) form a 7 X 7 AA repeats of P-S-R-R-S-R-[TS] region. Positions 1959–2030 (PSRRRRSRSV…SAVRRRSFSI (72 aa)) are 2 X 19 AA repeats of P-S-R-R-R-R-S-R-S-V-V-R-R-R-S-F-S-I-S. 3 positions are modified to phosphoserine: S1973, S1975, and S1977. The segment covering 1980–2027 (RRSRTPSRRSRTPSRRSRTPSRRSRTPSRRSRTPSRRRRSRSAVRRRS) has biased composition (basic residues). Residues 2013–2019 (PSRRRRS) form a 2-7; approximate repeat. A 3-2; approximate repeat occupies 2020 to 2030 (RSAVRRRSFSI). Residues S2027, S2029, S2031, S2047, and S2049 each carry the phosphoserine modification. A 3 X tandem repeats of [ST]-P-[VLI]-R-[RL]-[RK]-[RF]-S-R region spans residues 2031-2057 (SPVRLRRSRTPLRRRFSRSPIRRKRSR). The span at 2034–2056 (RLRRSRTPLRRRFSRSPIRRKRS) shows a compositional bias: basic residues. The segment covering 2057–2072 (RSSERGRSPKRLTDLD) has biased composition (basic and acidic residues). Position 2073 is an N6-acetyllysine; alternate (K2073). K2073 is covalently cross-linked (Glycyl lysine isopeptide (Lys-Gly) (interchain with G-Cter in SUMO2); alternate). K2110 participates in a covalent cross-link: Glycyl lysine isopeptide (Lys-Gly) (interchain with G-Cter in SUMO2). S2147 carries the post-translational modification Phosphoserine. K2167 is covalently cross-linked (Glycyl lysine isopeptide (Lys-Gly) (interchain with G-Cter in SUMO2)). Residue T2181 is modified to Phosphothreonine. Residues 2192-2238 (EFPVSSGSQHRKKEADSVYGEWVPVEKNGEESKDDDNVFSSSLPSEP) are disordered. Phosphoserine is present on S2256. A G-patch domain is found at 2323-2369 (TGGMGAVLMRKMGWREGEGLGKNKEGNKEPILVDFKTDRKGLVAVGE). The DRBM domain occupies 2389 to 2444 (HPVSALMEICNKRRWQPPEFLLVHDSGPDHRKHFLFRVLRNGSPYQPNCMFFLNRY).

As to quaternary structure, interacts with SRSF2. Associates with the spliceosome. Interacts with USH1G. In terms of tissue distribution, widely expressed. Highly expressed in brain, heart, spleen, liver, skeletal muscle, kidney and testis.

Its subcellular location is the nucleus speckle. Functionally, RNA-binding protein that acts as a mRNA splicing cofactor by promoting efficient splicing of transcripts that possess weak splice sites. Specifically promotes splicing of many cell-cycle and DNA-repair transcripts that possess weak splice sites, such as TUBG1, KATNB1, TUBGCP2, AURKB, PCNT, AKT1, RAD23A, and FANCG. Probably acts by facilitating the interaction between Serine/arginine-rich proteins such as SRSF2 and the RNA polymerase II. Also binds to DNA; binds to the consensus DNA sequence: 5'-GA[GT]AN[CG][AG]CC-3'. Essential for correct RNA splicing of multiple genes critical for brain development, neuronal migration and metabolism, including TUBG1, FLNA, PNKP, WDR62, PSMD3, PCK2, PFKL, IDH2, and ACY1. May also regulate the ghrelin signaling in hypothalamic neuron by acting as a negative regulator of GHSR expression. In Mus musculus (Mouse), this protein is Protein SON (Son).